The following is an 841-amino-acid chain: MMAHHSMDDRDSPDKGFDSGKYVRYTPEQVEALERVYAECPKPSSLRRQQLIRECPILCNIEPRQIKVWFQNRRCREKQRKESARLQTVNRKLSAMNKLLMEENDRLQKQVSNLVYENGFMKHRIHTASGTTTDNSCESVVVSGQQRQQQNPTHQHPQRDVNNPANLLSIAEETLAEFLCKATGTAVDWVQMIGMKPGPDSIGIVAVSRNCSGIAARACGLVSLEPMKVAEILKDRPSWFRDCRCVETLNVIPTGNGGTIELVNTQIYAPTTLAAARDFWTLRYSTSLEDGSYVVCERSLTSATGGPNGPLSSSFVRAKMLSSGFLIRPCDGGGSIIHIVDHVDLDVSSVPEVLRPLYESSKILAQKMTVAALRHVRQIAQETSGEVQYSGGRQPAVLRTFSQRLCRGFNDAVNGFVDDGWSPMSSDGGEDITIMINSSSAKFAGSQYGSSFLPSFGSGVLCAKASMLLQNVPPLVLIRFLREHRAEWADYGVDAYSAASLRATPYAVPCVRTGGFPSNQVILPLAQTLEHEEFLEVVRLGGHAYSPEDMGLSRDMYLLQLCSGVDENVVGGCAQLVFAPIDESFADDAPLLPSGFRVIPLDQKTNPNDHQSASRTRDLASSLDGSTKTDSETNSRLVLTIAFQFTFDNHSRDNVATMARQYVRNVVGSIQRVALAITPRPGSMQLPTSPEALTLVRWITRSYSIHTGADLFGADSQSCGGDTLLKQLWDHSDAILCCSLKTNASPVFTFANQAGLDMLETTLVALQDIMLDKTLDDSGRRALCSEFAKIMQQGYANLPAGICVSSMGRPVSYEQATVWKVVDDNESNHCLAFTLVSWSFV.

Positions 1–18 are enriched in basic and acidic residues; that stretch reads MMAHHSMDDRDSPDKGFD. The tract at residues 1–21 is disordered; the sequence is MMAHHSMDDRDSPDKGFDSGK. A DNA-binding region (homeobox) is located at residues 18–81; the sequence is DSGKYVRYTP…NRRCREKQRK (64 aa). Positions 85-118 form a coiled coil; that stretch reads RLQTVNRKLSAMNKLLMEENDRLQKQVSNLVYEN. 2 disordered regions span residues 140-162 and 602-630; these read VVVS…RDVN and DQKT…TKTD. Over residues 145 to 155 the composition is skewed to low complexity; sequence QQRQQQNPTHQ. An START domain is found at 160 to 388; that stretch reads DVNNPANLLS…IAQETSGEVQ (229 aa). Residues 603 to 614 show a composition bias toward polar residues; sequence QKTNPNDHQSAS.

Belongs to the HD-ZIP homeobox family. Class III subfamily. Binds DNA as homodimer. Interacts with ESR1 and ESR2. Interacts with ZPR3.

The protein localises to the nucleus. In terms of biological role, probable transcription factor involved in the determination of adaxial-abaxial polarity in ovule primordium. Specifies adaxial leaf fates. Binds to the DNA sequence 5'-GTAAT[GC]ATTAC-3'. This is Homeobox-leucine zipper protein ATHB-9 (ATHB-9) from Arabidopsis thaliana (Mouse-ear cress).